Reading from the N-terminus, the 97-residue chain is Cobalt transport protein CbiN (97 aa).

A run of 2 helical transmembrane segments spans residues 6–26 (VLMILGVIILILAPLIMYSGL) and 68–88 (SLLFALQAAIGAIIIGYFFGY).

This sequence belongs to the CbiN family. As to quaternary structure, forms an energy-coupling factor (ECF) transporter complex composed of an ATP-binding protein (A component, CbiO), a transmembrane protein (T component, CbiQ) and 2 possible substrate-capture proteins (S components, CbiM and CbiN) of unknown stoichimetry.

It is found in the cell membrane. Its pathway is cofactor biosynthesis; adenosylcobalamin biosynthesis. In terms of biological role, part of the energy-coupling factor (ECF) transporter complex CbiMNOQ involved in cobalt import. This is Cobalt transport protein CbiN from Methanococcus maripaludis (strain C5 / ATCC BAA-1333).